A 1166-amino-acid chain; its full sequence is Serine-aspartate repeat-containing protein E (1166 aa).

The first 52 residues, 1 to 52 (MINRDNKKAITKKGMISNRLNKFSIRKYTVGTASILVGTTLIFGLGNQEAKA), serve as a signal peptide directing secretion. A YSIRK-G/S signaling motif motif is present at residues 23–34 (FSIRKYTVGTAS). A ligand binding A region region spans residues 53 to 606 (AENTSTENAK…GDGTVKPEEK (554 aa)). A disordered region spans residues 54–230 (ENTSTENAKQ…SKEELKNNPE (177 aa)). Positions 61 to 75 (AKQDDATTSDNKEVV) are enriched in basic and acidic residues. Residues 77 to 90 (ETENNSTTENNSTN) show a composition bias toward low complexity. Positions 92-108 (IKKETNTDSQPEAKKES) are enriched in basic and acidic residues. Positions 118-129 (NNVTATTETKPQ) are enriched in polar residues. Residues 130 to 145 (NIEKENVKPSTDKTAT) are compositionally biased toward basic and acidic residues. The span at 166–178 (TTKPSTSEPSTSE) shows a compositional bias: low complexity. A compositionally biased stretch (polar residues) spans 179-212 (IQTKPTTPQESTNIENSQPQPTPSKVDNQVTDAT). A compositionally biased stretch (basic and acidic residues) spans 221-230 (SKEELKNNPE). CNA-B domains lie at 607-719 (LYKI…YKEP), 720-829 (KYNL…YKTP), and 830-940 (KYSL…EEDT). The tract at residues 904–1141 (VTNTTEDDKD…TGSENNGSNN (238 aa)) is disordered. Acidic residues-rich tracts occupy residues 908–918 (TEDDKDADGGE) and 935–1105 (YFEE…DSDS). An LPXTG sorting signal motif is present at residues 1129-1133 (LPETG). Residue Thr1132 is modified to Pentaglycyl murein peptidoglycan amidated threonine. Residues 1133–1166 (GSENNGSNNATLFGGLFAALGSLLLFGRRKKQNK) constitute a propeptide, removed by sortase.

This sequence belongs to the serine-aspartate repeat-containing protein (SDr) family. Interacts with host complement factor H/CFAH (via C-terminus). Interacts with host complement regulator C4BPA.

It localises to the secreted. It is found in the cell wall. In terms of biological role, cell surface-associated calcium-binding protein which plays an important role in adhesion and pathogenesis. Contributes to the resistance to killing by innate immune components in blood and thus attenuates bacterial clearance by interacting with host complement factor H/CFAH and modulating its activity. Inhibits also bacterial opsonization and killing by interacting with host complement regulator C4BPA and thus inhibiting classical complement pathway activation. The protein is Serine-aspartate repeat-containing protein E (sdrE) of Staphylococcus aureus (strain Newman).